The following is a 129-amino-acid chain: MIFDVKAPILGFETIHKMHLQKIDEIFLRLNSAEDNSVVSFTLVNPFALRKYEFEVPTPLKILLELEGAKSVLVANIMVVQTPIELSTVNYLAPLIFNLDKQLMGQVVLDSKKYPHYHLRENILSHTHE.

It belongs to the FliW family. As to quaternary structure, interacts with translational regulator CsrA and flagellin(s).

The protein resides in the cytoplasm. Acts as an anti-CsrA protein, binds CsrA and prevents it from repressing translation of its target genes, one of which is flagellin. Binds to flagellin and participates in the assembly of the flagellum. The sequence is that of Flagellar assembly factor FliW 2 from Helicobacter pylori (strain J99 / ATCC 700824) (Campylobacter pylori J99).